The chain runs to 397 residues: Acetate kinase (397 aa).

Asparagine 8 provides a ligand contact to Mg(2+). Position 15 (lysine 15) interacts with ATP. A substrate-binding site is contributed by arginine 89. Aspartate 146 (proton donor/acceptor) is an active-site residue. Residues 206-210, 281-283, and 329-333 contribute to the ATP site; these read HLGNG, DLR, and GVGEN. Mg(2+) is bound at residue glutamate 382.

This sequence belongs to the acetokinase family. As to quaternary structure, homodimer. Requires Mg(2+) as cofactor. It depends on Mn(2+) as a cofactor.

The protein resides in the cytoplasm. The catalysed reaction is acetate + ATP = acetyl phosphate + ADP. It functions in the pathway metabolic intermediate biosynthesis; acetyl-CoA biosynthesis; acetyl-CoA from acetate: step 1/2. In terms of biological role, catalyzes the formation of acetyl phosphate from acetate and ATP. Can also catalyze the reverse reaction. The protein is Acetate kinase of Bacillus mycoides (strain KBAB4) (Bacillus weihenstephanensis).